The primary structure comprises 57 residues: Small ribosomal subunit protein bS21 (57 aa).

Positions Val32–Ser42 are enriched in basic and acidic residues. The interval Val32–Arg57 is disordered. Over residues Gln43–Arg57 the composition is skewed to basic residues.

The protein belongs to the bacterial ribosomal protein bS21 family.

The protein is Small ribosomal subunit protein bS21 of Synechococcus elongatus (strain ATCC 33912 / PCC 7942 / FACHB-805) (Anacystis nidulans R2).